The chain runs to 697 residues: Polyribonucleotide nucleotidyltransferase (697 aa).

Positions 490 and 496 each coordinate Mg(2+). Residues 557–616 (PKVVTMTIKPEKIRDVIGPGGKKINEIIDETGVKLDIEQDGTIFIGAVDKDAIARARSII) enclose the KH domain. Residues 626–694 (GQVYEGKVKR…KQGRVNASHK (69 aa)) form the S1 motif domain.

This sequence belongs to the polyribonucleotide nucleotidyltransferase family. Mg(2+) is required as a cofactor.

Its subcellular location is the cytoplasm. The catalysed reaction is RNA(n+1) + phosphate = RNA(n) + a ribonucleoside 5'-diphosphate. Its function is as follows. Involved in mRNA degradation. Catalyzes the phosphorolysis of single-stranded polyribonucleotides processively in the 3'- to 5'-direction. This Staphylococcus saprophyticus subsp. saprophyticus (strain ATCC 15305 / DSM 20229 / NCIMB 8711 / NCTC 7292 / S-41) protein is Polyribonucleotide nucleotidyltransferase.